We begin with the raw amino-acid sequence, 283 residues long: Protein/nucleic acid deglycase HchA (283 aa).

Zn(2+)-binding residues include histidine 86, glutamate 91, and histidine 123. Cysteine 185 functions as the Nucleophile in the catalytic mechanism.

It belongs to the peptidase C56 family. HchA subfamily. In terms of assembly, homodimer.

The protein resides in the cytoplasm. The catalysed reaction is N(omega)-(1-hydroxy-2-oxopropyl)-L-arginyl-[protein] + H2O = lactate + L-arginyl-[protein] + H(+). It carries out the reaction N(6)-(1-hydroxy-2-oxopropyl)-L-lysyl-[protein] + H2O = lactate + L-lysyl-[protein] + H(+). It catalyses the reaction S-(1-hydroxy-2-oxopropyl)-L-cysteinyl-[protein] + H2O = lactate + L-cysteinyl-[protein] + H(+). The enzyme catalyses N(omega)-(1-hydroxy-2-oxoethyl)-L-arginyl-[protein] + H2O = L-arginyl-[protein] + glycolate + H(+). The catalysed reaction is N(6)-(1-hydroxy-2-oxoethyl)-L-lysyl-[protein] + H2O = glycolate + L-lysyl-[protein] + H(+). It carries out the reaction S-(1-hydroxy-2-oxoethyl)-L-cysteinyl-[protein] + H2O = glycolate + L-cysteinyl-[protein] + H(+). It catalyses the reaction N(2)-(1-hydroxy-2-oxopropyl)-dGTP + H2O = lactate + dGTP + H(+). The enzyme catalyses N(2)-(1-hydroxy-2-oxopropyl)-GTP + H2O = lactate + GTP + H(+). The catalysed reaction is N(2)-(1-hydroxy-2-oxopropyl)-GDP + H2O = lactate + GDP + H(+). It carries out the reaction N(2)-(1-hydroxy-2-oxopropyl)-GMP + H2O = lactate + GMP + H(+). It catalyses the reaction N(2)-(1-hydroxy-2-oxoethyl)-dGTP + H2O = dGTP + glycolate + H(+). The enzyme catalyses N(2)-(1-hydroxy-2-oxoethyl)-GTP + H2O = glycolate + GTP + H(+). The catalysed reaction is N(2)-(1-hydroxy-2-oxoethyl)-GDP + H2O = glycolate + GDP + H(+). It carries out the reaction N(2)-(1-hydroxy-2-oxoethyl)-GMP + H2O = glycolate + GMP + H(+). It catalyses the reaction an N(2)-(1-hydroxy-2-oxopropyl)-guanosine in RNA + H2O = a guanosine in RNA + lactate + H(+). The enzyme catalyses an N(2)-(1-hydroxy-2-oxopropyl)-2'-deoxyguanosine in DNA + H2O = a 2'-deoxyguanosine in DNA + lactate + H(+). The catalysed reaction is an N(2)-(1-hydroxy-2-oxoethyl)-guanosine in RNA + H2O = a guanosine in RNA + glycolate + H(+). It carries out the reaction an N(2)-(1-hydroxy-2-oxoethyl)-2'-deoxyguanosine in DNA + H2O = a 2'-deoxyguanosine in DNA + glycolate + H(+). Its function is as follows. Protein and nucleotide deglycase that catalyzes the deglycation of the Maillard adducts formed between amino groups of proteins or nucleotides and reactive carbonyl groups of glyoxals. Thus, functions as a protein deglycase that repairs methylglyoxal- and glyoxal-glycated proteins, and releases repaired proteins and lactate or glycolate, respectively. Deglycates cysteine, arginine and lysine residues in proteins, and thus reactivates these proteins by reversing glycation by glyoxals. Acts on early glycation intermediates (hemithioacetals and aminocarbinols), preventing the formation of Schiff bases and advanced glycation endproducts (AGE). Also functions as a nucleotide deglycase able to repair glycated guanine in the free nucleotide pool (GTP, GDP, GMP, dGTP) and in DNA and RNA. Is thus involved in a major nucleotide repair system named guanine glycation repair (GG repair), dedicated to reversing methylglyoxal and glyoxal damage via nucleotide sanitization and direct nucleic acid repair. Plays an important role in protecting cells from carbonyl stress. The protein is Protein/nucleic acid deglycase HchA of Shigella flexneri.